Consider the following 84-residue polypeptide: Small ribosomal subunit protein bS20 (84 aa).

A disordered region spans residues 1-28; it reads MPNIKSAIKRVKTAETRNSRNASQRSAM.

Belongs to the bacterial ribosomal protein bS20 family.

Binds directly to 16S ribosomal RNA. The polypeptide is Small ribosomal subunit protein bS20 (Listeria monocytogenes serotype 4b (strain CLIP80459)).